Consider the following 121-residue polypeptide: Ribonuclease P protein component (121 aa).

The protein belongs to the RnpA family. As to quaternary structure, consists of a catalytic RNA component (M1 or rnpB) and a protein subunit.

The catalysed reaction is Endonucleolytic cleavage of RNA, removing 5'-extranucleotides from tRNA precursor.. RNaseP catalyzes the removal of the 5'-leader sequence from pre-tRNA to produce the mature 5'-terminus. It can also cleave other RNA substrates such as 4.5S RNA. The protein component plays an auxiliary but essential role in vivo by binding to the 5'-leader sequence and broadening the substrate specificity of the ribozyme. This is Ribonuclease P protein component from Coxiella burnetii (strain Dugway 5J108-111).